Here is a 189-residue protein sequence, read N- to C-terminus: Peptidyl-tRNA hydrolase (189 aa).

A tRNA-binding site is contributed by Tyr14. The active-site Proton acceptor is His19. Residues Phe61, Asn63, and Asn109 each contribute to the tRNA site.

It belongs to the PTH family. Monomer.

The protein resides in the cytoplasm. It catalyses the reaction an N-acyl-L-alpha-aminoacyl-tRNA + H2O = an N-acyl-L-amino acid + a tRNA + H(+). Functionally, hydrolyzes ribosome-free peptidyl-tRNAs (with 1 or more amino acids incorporated), which drop off the ribosome during protein synthesis, or as a result of ribosome stalling. Catalyzes the release of premature peptidyl moieties from peptidyl-tRNA molecules trapped in stalled 50S ribosomal subunits, and thus maintains levels of free tRNAs and 50S ribosomes. This is Peptidyl-tRNA hydrolase from Sulfurovum sp. (strain NBC37-1).